A 756-amino-acid polypeptide reads, in one-letter code: MLGQFSPGEPYTTSLSSTPPWSPANQFQLFRFRSRTEPIDWRRLSTLDVDRVARDMDVSVLQDFIMTVTFCALEGERCPNCRGPVDPSLVKLLRMSQLSTEYLLQCQDFLSSQLAGLEERLQAATSLVQQGEGQRAELEKSLQETKQENRRRKQLIATQQLLLQASANNYHKCQFCEKSFVNYSYLQAHVQRRHPEVTDAEKQKKRKVEEMEDGIEELKEKLRLTQMQLQEEQQADNLRRQQEQEQQRRREQSEKEALERWKEDERRKFNQEIADLRQLFLQESKEMASKSSSIEAKLLVLQNKEMAGFNNASLQQDSDPEKEMRENRERELRERIARKKSEWRRKFQEAQKRHQQENKELKSENSRLLKALSVEKNSTSSVQKLQQQVVSLSSQLSQKDRLIKSQEEKIKKLSATPVPVSVVSLNDQDSSEEPVEQDRDSQEDSDEPQWKAPKIRKGKPALMRESKPILEESLEQKLENMGLRKGTKGISKQTFKSLSSLLAGQRLQKFRQQTNLQSLRDSLTLEVTRRVKSLQKSSGKPTPNTLKQRGKKTSTPLNEKSLRFRQDSKASDRREKSQQPKTLLPTPTPRSKAPPPNQTPKILAKKNSTPPFSSDEESVEDTAYITSSRGNLSSSVRVVQSGSLLNPTTEPDWTDSELSEDLDLPKIYKTCNPQGSVVQTLTRSLERQLSTPIKTPVGGTRVLPPSSTTPRPAIVKQQALSGEESDSELSSIEELTGRRAGGHKSLEVDRTSGTSA.

The segment at 1–20 is disordered; sequence MLGQFSPGEPYTTSLSSTPP. A compositionally biased stretch (low complexity) spans 10-19; sequence PYTTSLSSTP. The stretch at 108–158 forms a coiled coil; the sequence is DFLSSQLAGLEERLQAATSLVQQGEGQRAELEKSLQETKQENRRRKQLIAT. The C2H2-type zinc finger occupies 171-194; the sequence is HKCQFCEKSFVNYSYLQAHVQRRH. Composition is skewed to basic and acidic residues over residues 193–202, 237–262, 319–335, and 344–365; these read RHPEVTDAEK, NLRR…ERWK, DPEK…LRER, and RRKF…KSEN. Disordered stretches follow at residues 193-212, 233-262, 310-365, 409-466, 531-626, and 693-756; these read RHPE…EEME, QQAD…ERWK, NNAS…KSEN, KIKK…MRES, VKSL…AYIT, and IKTP…GTSA. Coiled-coil stretches lie at residues 196–283 and 321–416; these read EVTD…FLQE and EKEM…LSAT. Residues 534 to 558 show a composition bias toward polar residues; it reads LQKSSGKPTPNTLKQRGKKTSTPLN. Over residues 560–578 the composition is skewed to basic and acidic residues; sequence KSLRFRQDSKASDRREKSQ. Residues 586–598 are compositionally biased toward pro residues; the sequence is TPTPRSKAPPPNQ.

The protein belongs to the DZIP C2H2-type zinc-finger protein family.

The protein resides in the cytoplasm. The protein localises to the cytoskeleton. It localises to the cilium basal body. It is found in the microtubule organizing center. Its subcellular location is the centrosome. The protein resides in the centriole. Its function is as follows. Involved in primary cilium formation. Probably acts as a transition zone protein required for localization of PKD1/PC1 and PKD2/PC2 to the ciliary membrane. The sequence is that of Cilium assembly protein DZIP1L (dzip1l) from Danio rerio (Zebrafish).